The following is an 892-amino-acid chain: Phenylalanine--tRNA ligase beta subunit (892 aa).

The tRNA-binding domain maps to 39 to 150; that stretch reads NPGVEGVVVG…PGLEPGMDVA (112 aa). The B5 domain maps to 406-569; sequence AVPPVILLRT…RCEGYDAIPL (164 aa). The interval 442 to 518 is insert; it reads VLTPADLAAD…ALLGGGESDG (77 aa). 4 residues coordinate Mg(2+): D547, D553, E556, and E557. Residues 799 to 891 form the FDX-ACB domain; sequence PRFPAVTRDV…ALKALGAELR (93 aa).

It belongs to the phenylalanyl-tRNA synthetase beta subunit family. Type 1 subfamily. Tetramer of two alpha and two beta subunits. The cofactor is Mg(2+).

The protein resides in the cytoplasm. The enzyme catalyses tRNA(Phe) + L-phenylalanine + ATP = L-phenylalanyl-tRNA(Phe) + AMP + diphosphate + H(+). In Symbiobacterium thermophilum (strain DSM 24528 / JCM 14929 / IAM 14863 / T), this protein is Phenylalanine--tRNA ligase beta subunit.